The sequence spans 501 residues: ADP,ATP carrier protein 3 (501 aa).

12 helical membrane passes run 23–43 (LKLFIPMALMMLCILFNFGAL), 59–79 (IISFLKLWLVLPSCVIFTVLY), 90–110 (YIFYSIVGTFLLFFLLFAYII), 146–166 (YALMYIFSELWSAVVINLMFW), 183–203 (PVLGMIGNIGLIIAGSVLVFF), 227–247 (IILQPIISIIVTAGIIAMFLF), 293–313 (IALLIICYGLLINIVEGPWKA), 326–346 (VNFMGMFNIWMGISCVTFMII), 361–381 (LLTPIMLSITGFIFFIFIIFI), 383–403 (EIGTCFGDFNLLYVAIIVGAI), 446–466 (FGKSLGAFIQSLIFIIIPTAT), and 470–490 (IIIYLLVIFIVMMNLWIWNII).

Belongs to the ADP/ATP translocase tlc family.

Its subcellular location is the cell membrane. Provides the rickettsial cell with host ATP in exchange for rickettsial ADP. This is an obligate exchange system. This energy acquiring activity is an important component of rickettsial parasitism. This Rickettsia typhi (strain ATCC VR-144 / Wilmington) protein is ADP,ATP carrier protein 3 (tlcC).